The chain runs to 536 residues: uncharacterized protein (536 aa).

Disordered regions lie at residues 1–76 (MSFT…SPAS) and 204–237 (NWNS…SNKS). 2 stretches are compositionally biased toward low complexity: residues 7–76 (TSSV…SPAS) and 204–234 (NWNS…PSKS). A helical transmembrane segment spans residues 247-267 (CSVAIPVGVVLILIGLGIFLW). Disordered stretches follow at residues 287–354 (YGFN…LLGG) and 373–536 (DASD…LNLF). Residues 290 to 326 (NPNQPSNFRSPNRAPSTNNRYRGWNGSPTPAAGNNTN) show a composition bias toward polar residues. A compositionally biased stretch (low complexity) spans 327–350 (GRPVAPRPSAGAGGANPPAASQPG). A helical membrane pass occupies residues 351 to 371 (LLGGSSNSAGPIAAATAAGVG). A compositionally biased stretch (polar residues) spans 403–424 (SASNEAEATMPPSNGSNFSEGL). Low complexity predominate over residues 430-454 (ESGPAVGAAGAAAEAAEHSGSGSDS). Residues 480 to 509 (SYGSRAALSSRSQSNLLSPTSTGASNQPNY) show a composition bias toward polar residues. Residues 517–527 (SSSNVSIPRSS) show a composition bias toward low complexity.

Its subcellular location is the membrane. This is an uncharacterized protein from Schizosaccharomyces pombe (strain 972 / ATCC 24843) (Fission yeast).